The following is a 540-amino-acid chain: Fumonisin B1 esterase (540 aa).

The Acyl-ester intermediate role is filled by serine 240. Residues glutamate 356 and histidine 448 each act as charge relay system in the active site. The segment at 521–540 (QVGSGEGLGVSPSKACQPSK) is disordered.

Belongs to the type-B carboxylesterase/lipase family.

It catalyses the reaction fumonisin B1 + 2 H2O = 2 tricarballylate + (2S,3S,5R,10R,12S,14S,15R,16R)-2-amino-12,16-dimethylicosane-3,5,10,14,15-pentol + 2 H(+). Functionally, involved in degradation of fumonisin B1. Catalyzes the hydrolysis of fumonisin B1 (FB1) to aminopentol (HFB1). This chain is Fumonisin B1 esterase (fumD), found in Sphingopyxis macrogoltabida (Sphingomonas macrogoltabidus).